We begin with the raw amino-acid sequence, 496 residues long: Glutamyl-tRNA(Gln) amidotransferase subunit A, mitochondrial (496 aa).

Active-site charge relay system residues include Lys80 and Ser161. The Acyl-ester intermediate role is filled by Ser185.

Belongs to the amidase family. GatA subfamily. Subunit of the heterotrimeric GatCAB amidotransferase (AdT) complex, composed of A, B and C subunits.

It localises to the mitochondrion. It carries out the reaction L-glutamyl-tRNA(Gln) + L-glutamine + ATP + H2O = L-glutaminyl-tRNA(Gln) + L-glutamate + ADP + phosphate + H(+). Allows the formation of correctly charged Gln-tRNA(Gln) through the transamidation of misacylated Glu-tRNA(Gln) in the mitochondria. The reaction takes place in the presence of glutamine and ATP through an activated gamma-phospho-Glu-tRNA(Gln). The chain is Glutamyl-tRNA(Gln) amidotransferase subunit A, mitochondrial from Culex quinquefasciatus (Southern house mosquito).